Here is a 130-residue protein sequence, read N- to C-terminus: Prefoldin subunit alpha (130 aa).

The protein belongs to the prefoldin subunit alpha family. As to quaternary structure, heterohexamer of two alpha and four beta subunits.

The protein localises to the cytoplasm. Molecular chaperone capable of stabilizing a range of proteins. Seems to fulfill an ATP-independent, HSP70-like function in archaeal de novo protein folding. This is Prefoldin subunit alpha (pfdA) from Thermoplasma acidophilum (strain ATCC 25905 / DSM 1728 / JCM 9062 / NBRC 15155 / AMRC-C165).